Here is a 147-residue protein sequence, read N- to C-terminus: Nucleoside diphosphate kinase (147 aa).

ATP-binding residues include Lys9, Phe57, Arg85, Thr91, Arg102, and Asn112. The active-site Pros-phosphohistidine intermediate is the His115.

This sequence belongs to the NDK family. The cofactor is Mg(2+).

The protein resides in the cytoplasm. It catalyses the reaction a 2'-deoxyribonucleoside 5'-diphosphate + ATP = a 2'-deoxyribonucleoside 5'-triphosphate + ADP. The catalysed reaction is a ribonucleoside 5'-diphosphate + ATP = a ribonucleoside 5'-triphosphate + ADP. Its function is as follows. Major role in the synthesis of nucleoside triphosphates other than ATP. The ATP gamma phosphate is transferred to the NDP beta phosphate via a ping-pong mechanism, using a phosphorylated active-site intermediate. The chain is Nucleoside diphosphate kinase from Ignicoccus hospitalis (strain KIN4/I / DSM 18386 / JCM 14125).